A 224-amino-acid chain; its full sequence is Germin-like protein 8-12 (224 aa).

The signal sequence occupies residues 1–23; the sequence is MASSSLFLLGALLVLASWQAIVA. A disulfide bridge links Cys33 with Cys48. The 154-residue stretch at 60 to 213 folds into the Cupin type-1 domain; the sequence is FNAAKFDMPR…AFQVEKKLID (154 aa). A glycan (N-linked (GlcNAc...) asparagine) is linked at Asn78. Mn(2+) is bound by residues His111, His113, Glu118, and His158.

This sequence belongs to the germin family. Oligomer (believed to be a pentamer but probably hexamer).

The protein resides in the secreted. It localises to the extracellular space. It is found in the apoplast. Its function is as follows. Plays a role in broad-spectrum disease resistance. Probably has no oxalate oxidase activity even if the active site is conserved. This Oryza sativa subsp. japonica (Rice) protein is Germin-like protein 8-12.